The chain runs to 843 residues: DNA helicase MCM8 (843 aa).

The segment covering 1-23 (MSQGWRGGWSGGRGGNPYAGGWR) has biased composition (gly residues). Residues 1-52 (MSQGWRGGWSGGRGGNPYAGGWRGRPWRGRGQGGSWSRNSGRDPVCFSTAPP) are disordered. One can recognise an MCM domain in the interval 394–601 (LFQLIVNSLC…DHDHLLSEHV (208 aa)). 446 to 453 (GDPGLGKS) contributes to the ATP binding site.

This sequence belongs to the MCM family. In terms of assembly, component of the MCM8-MCM9 complex, which forms a hexamer composed of mcm8 and mcm9.

The protein localises to the nucleus. The enzyme catalyses ATP + H2O = ADP + phosphate + H(+). In terms of biological role, component of the MCM8-MCM9 complex, a complex involved in homologous recombination repair following DNA interstrand cross-links and plays a key role during gametogenesis. The MCM8-MCM9 complex probably acts as a hexameric helicase required to process aberrant forks into homologous recombination substrates and to orchestrate homologous recombination with resection, fork stabilization and fork restart. In eggs, required for elongation during DNA replication by facilitating the recruitment of rpa2/rpa34 and stimulating the processivity of DNA polymerases at replication foci. Probably not required for DNA replication in other cells. This is DNA helicase MCM8 (mcm8) from Xenopus tropicalis (Western clawed frog).